We begin with the raw amino-acid sequence, 248 residues long: Short-chain dehydrogenase/reductase iacG (248 aa).

The NADP(+) site is built by I14, N35, K41, D58, R120, and V187.

Belongs to the short-chain dehydrogenases/reductases (SDR) family.

Its pathway is secondary metabolite biosynthesis. Its function is as follows. Short-chain dehydrogenase/reductase; part of the gene cluster that mediates the biosynthesis of iso-A82775C, a enylepoxycyclohexane and biosynthetic precursor of the chloropestolide anticancer natural products. Within the cluster, the prenyltransferase iacE prenylates siccayne to generate pestalodiol E, using dimethylallyl diphosphate (DMAPP) as cosubstrate. The probable oxidoreductase iacF is then involved in the epoxidation of pestalodiol F to pestalodiol F, which is further converted to pestalofone A by the short-chain dehydrogenase/reductase iacG. Iso-A82775C is subsequently generated from pestalofone A by the short-chain dehydrogenase/reductase iacC. Iso-A82775C is further condensed with maldoxin via a Diels-Alder reaction to produce the anticancer natural products chloropestolides A to E. The sequence is that of Short-chain dehydrogenase/reductase iacG from Pestalotiopsis fici (strain W106-1 / CGMCC3.15140).